The primary structure comprises 457 residues: Paired box protein Pax-8 (457 aa).

The segment at residues 9–135 is a DNA-binding region (paired); that stretch reads GHGGLNQLGG…SSINRIIRTK (127 aa). Residues 12–68 are PAI subdomain; it reads GLNQLGGAFVNGRPLPEVVRQRIVDLAHQGVRPCDISRQLRVSHGCVSKILGRYYET. Residues 87 to 135 are RED subdomain; sequence KVVEKIGDYKRQNPTMFAWEIRDRLLAEGVCDNDTVPSVSSINRIIRTK. The segment covering 159-182 has biased composition (polar residues); the sequence is LIPSSAVTPPESPQSDSLGSTYSI. The disordered stretch occupies residues 159 to 226; that stretch reads LIPSSAVTPP…SSGPRKHLRT (68 aa). S304 carries the phosphoserine modification.

Interacts with WWTR1.

It localises to the nucleus. Thought to encode a transcription factor. It may have a role in kidney cell differentiation. May play a regulatory role in mammalian development. The sequence is that of Paired box protein Pax-8 (Pax8) from Rattus norvegicus (Rat).